Here is a 95-residue protein sequence, read N- to C-terminus: Large ribosomal subunit protein uL23 (95 aa).

This sequence belongs to the universal ribosomal protein uL23 family. In terms of assembly, part of the 50S ribosomal subunit. Contacts protein L29, and trigger factor when it is bound to the ribosome.

In terms of biological role, one of the early assembly proteins it binds 23S rRNA. One of the proteins that surrounds the polypeptide exit tunnel on the outside of the ribosome. Forms the main docking site for trigger factor binding to the ribosome. This is Large ribosomal subunit protein uL23 from Heliobacterium modesticaldum (strain ATCC 51547 / Ice1).